Here is a 231-residue protein sequence, read N- to C-terminus: N-acetylmuramate alpha-1-phosphate uridylyltransferase (231 aa).

UTP-binding positions include 11 to 13 and lysine 23; that span reads GER. Asparagine 106 contacts substrate. Aspartate 108 contributes to the Mg(2+) binding site. Substrate is bound by residues aspartate 146 and aspartate 213. Aspartate 213 is a Mg(2+) binding site.

This sequence belongs to the nucleotidyltransferase MurU family. As to quaternary structure, monomer. It depends on Mg(2+) as a cofactor.

The catalysed reaction is N-acetyl-alpha-D-muramate 1-phosphate + UDP + H(+) = UDP-N-acetyl-alpha-D-muramate + phosphate. It functions in the pathway cell wall biogenesis; peptidoglycan recycling. Catalyzes the formation of UDP-N-acetylmuramate (UDP-MurNAc), a crucial precursor of the bacterial peptidoglycan cell wall, from UTP and MurNAc-alpha-1P. Is likely involved in peptidoglycan recycling as part of a cell wall recycling pathway that bypasses de novo biosynthesis of the peptidoglycan precursor UDP-MurNAc. Is able to complement the fosfomycin sensitivity phenotype of a P.putida mutant lacking murU. This Neisseria meningitidis serogroup B (strain ATCC BAA-335 / MC58) protein is N-acetylmuramate alpha-1-phosphate uridylyltransferase.